We begin with the raw amino-acid sequence, 370 residues long: Coiled-coil domain-containing protein 89 (370 aa).

The tract at residues 1 to 21 (MPQEEKTLRMDTPPPDEILGK) is disordered. Residue Thr-12 is modified to Phosphothreonine. The stretch at 36–346 (KEMDGLREAL…YDELRLQSEA (311 aa)) forms a coiled coil.

It belongs to the CCDC89 family. In terms of assembly, interacts with HEY1. In terms of tissue distribution, expression is restricted to the adult testis, where localization is almost exclusive to round spermatids.

The protein localises to the cytoplasm. It is found in the nucleus. The polypeptide is Coiled-coil domain-containing protein 89 (Mus musculus (Mouse)).